The chain runs to 224 residues: Biotin transport ATP-binding protein BioM (224 aa).

The ABC transporter domain occupies 3–224 (IQFESAGVSF…AIARYREIAA (222 aa)). 34–41 (GLNGSGKT) is an ATP binding site.

It belongs to the ABC transporter superfamily. As to quaternary structure, part of a biotin transporter complex composed of BioM, BioN and BioY.

The protein localises to the cell inner membrane. Involved in biotin uptake. This Rhizobium etli (strain ATCC 51251 / DSM 11541 / JCM 21823 / NBRC 15573 / CFN 42) protein is Biotin transport ATP-binding protein BioM (bioM).